The sequence spans 196 residues: DnaA initiator-associating protein DiaA (196 aa).

An SIS domain is found at 34-196; the sequence is MVQSLLNGNK…DNTLFPHQDD (163 aa).

Belongs to the SIS family. DiaA subfamily. In terms of assembly, homotetramer; dimer of dimers.

Functionally, required for the timely initiation of chromosomal replication via direct interactions with the DnaA initiator protein. This is DnaA initiator-associating protein DiaA from Photorhabdus laumondii subsp. laumondii (strain DSM 15139 / CIP 105565 / TT01) (Photorhabdus luminescens subsp. laumondii).